The following is a 369-amino-acid chain: Serine/threonine-protein acetyltransferase HopZ1a (369 aa).

Residues 1-46 (MGNVCVGGSRMSHQVYSPDRADTPPRSERNTPDRRQRAAGDAERTQ) form a disordered region. A compositionally biased stretch (basic and acidic residues) spans 19-46 (DRADTPPRSERNTPDRRQRAAGDAERTQ). The 1D-myo-inositol hexakisphosphate site is built by Arg-49, Lys-53, and Arg-106. Catalysis depends on residues His-150 and Glu-170. Residue His-150 coordinates CoA. Residues Ala-177 and 211-212 (KT) contribute to the CoA site. The active site involves Cys-216. 1D-myo-inositol hexakisphosphate-binding positions include Asn-222, 226–229 (KAHK), and 289–290 (KH). Residue Lys-289 is modified to N6-acetyllysine; by autocatalysis. 292–295 (ASLT) serves as a coordination point for CoA. 1D-myo-inositol hexakisphosphate is bound by residues 314-317 (SEGH) and Arg-326. Residues 331-334 (RVKR) and 344-348 (SNTQF) contribute to the CoA site. Gln-358 and Arg-362 together coordinate 1D-myo-inositol hexakisphosphate.

The protein belongs to the acetyltransferase YopJ family. In terms of assembly, interacts with host plant JAZ proteins (e.g. Glycine max JAZ1 and Arabidospis thaliana TIFY10B/JAZ2, TIFY11A/JAZ5, TIFY11B/JAZ6, TIFY5A/JAZ8 and TIFY3B/JAZ12) and triggers their degradation. Binds directly to SZE1 and SZE2 at the host plasma membrane; this interaction with a complex made of, at least, SZE1, BKN2/SZE2, ZAR1 and ZED1 triggers host immunity. Requires 1D-myo-inositol hexakisphosphate as cofactor. Autoacetylated at Lys-289; while autoacetylation at Lys-289 is required for virulence function to some extent, it is not essential.

It localises to the secreted. The protein localises to the host cell membrane. Its subcellular location is the host cytoplasm. The protein resides in the host cytoskeleton. It is found in the host nucleus. The enzyme catalyses L-threonyl-[protein] + acetyl-CoA = O-acetyl-L-threonyl-[protein] + CoA. The catalysed reaction is L-seryl-[protein] + acetyl-CoA = O-acetyl-L-seryl-[protein] + CoA. It carries out the reaction L-lysyl-[protein] + acetyl-CoA = N(6)-acetyl-L-lysyl-[protein] + CoA + H(+). Its activity is regulated as follows. 1D-myo-inositol hexakisphosphate activates protein-acetyltransferase activity via an allosteric mechanism: 1D-myo-inositol hexakisphosphate-binding induces a conformational rearrangement that stimulates the interaction with acetyl-CoA. Acetyltransferase activity is activated by phytic acid. Its function is as follows. Serine/threonine-protein acetyltransferase translocated into infected cells, which impairs host microtubule network and host immunity by mediating acetylation of target proteins. Blocks secretion in host cells by mediating acetylation of host tubulin, thereby impairing host microbubule network. Impairs host cell immunity by mediating acetylation of host TIFY/JAZ transcription repressors (Arabidopsis thaliana TIFY10B/JAZ2, TIFY11A/JAZ5, TIFY11B/JAZ6, TIFY5A/JAZ8, TIFY9/JAZ10 and TIFY3B/JAZ12), thereby activating host jasmonate signaling. The chain is Serine/threonine-protein acetyltransferase HopZ1a from Pseudomonas syringae pv. syringae.